The chain runs to 468 residues: ATP synthase subunit beta (468 aa).

An ATP-binding site is contributed by 153–160 (GGAGVGKT).

It belongs to the ATPase alpha/beta chains family. F-type ATPases have 2 components, CF(1) - the catalytic core - and CF(0) - the membrane proton channel. CF(1) has five subunits: alpha(3), beta(3), gamma(1), delta(1), epsilon(1). CF(0) has three main subunits: a(1), b(2) and c(9-12). The alpha and beta chains form an alternating ring which encloses part of the gamma chain. CF(1) is attached to CF(0) by a central stalk formed by the gamma and epsilon chains, while a peripheral stalk is formed by the delta and b chains.

It is found in the cell membrane. It carries out the reaction ATP + H2O + 4 H(+)(in) = ADP + phosphate + 5 H(+)(out). Functionally, produces ATP from ADP in the presence of a proton gradient across the membrane. The catalytic sites are hosted primarily by the beta subunits. The protein is ATP synthase subunit beta of Ligilactobacillus salivarius (strain UCC118) (Lactobacillus salivarius).